The primary structure comprises 244 residues: Methylthioribulose-1-phosphate dehydratase (244 aa).

Residue C89 participates in substrate binding. Zn(2+)-binding residues include H107 and H109. E130 acts as the Proton donor/acceptor in catalysis. H192 is a Zn(2+) binding site.

The protein belongs to the aldolase class II family. MtnB subfamily. Zn(2+) is required as a cofactor.

The protein resides in the cytoplasm. The catalysed reaction is 5-(methylsulfanyl)-D-ribulose 1-phosphate = 5-methylsulfanyl-2,3-dioxopentyl phosphate + H2O. Its pathway is amino-acid biosynthesis; L-methionine biosynthesis via salvage pathway; L-methionine from S-methyl-5-thio-alpha-D-ribose 1-phosphate: step 2/6. Its function is as follows. Catalyzes the dehydration of methylthioribulose-1-phosphate (MTRu-1-P) into 2,3-diketo-5-methylthiopentyl-1-phosphate (DK-MTP-1-P). This is Methylthioribulose-1-phosphate dehydratase from Saccharomyces cerevisiae (strain ATCC 204508 / S288c) (Baker's yeast).